A 548-amino-acid chain; its full sequence is Dihydroxy-acid dehydratase (548 aa).

Asp-78 provides a ligand contact to Mg(2+). A [2Fe-2S] cluster-binding site is contributed by Cys-119. Positions 120 and 121 each coordinate Mg(2+). The residue at position 121 (Lys-121) is an N6-carboxylysine. Cys-185 contributes to the [2Fe-2S] cluster binding site. Glu-438 provides a ligand contact to Mg(2+). Catalysis depends on Ser-464, which acts as the Proton acceptor.

The protein belongs to the IlvD/Edd family. As to quaternary structure, homodimer. It depends on [2Fe-2S] cluster as a cofactor. Mg(2+) is required as a cofactor.

The catalysed reaction is (2R)-2,3-dihydroxy-3-methylbutanoate = 3-methyl-2-oxobutanoate + H2O. It catalyses the reaction (2R,3R)-2,3-dihydroxy-3-methylpentanoate = (S)-3-methyl-2-oxopentanoate + H2O. The protein operates within amino-acid biosynthesis; L-isoleucine biosynthesis; L-isoleucine from 2-oxobutanoate: step 3/4. It participates in amino-acid biosynthesis; L-valine biosynthesis; L-valine from pyruvate: step 3/4. Functionally, functions in the biosynthesis of branched-chain amino acids. Catalyzes the dehydration of (2R,3R)-2,3-dihydroxy-3-methylpentanoate (2,3-dihydroxy-3-methylvalerate) into 2-oxo-3-methylpentanoate (2-oxo-3-methylvalerate) and of (2R)-2,3-dihydroxy-3-methylbutanoate (2,3-dihydroxyisovalerate) into 2-oxo-3-methylbutanoate (2-oxoisovalerate), the penultimate precursor to L-isoleucine and L-valine, respectively. This Methanothrix thermoacetophila (strain DSM 6194 / JCM 14653 / NBRC 101360 / PT) (Methanosaeta thermophila) protein is Dihydroxy-acid dehydratase.